The following is a 1485-amino-acid chain: Chromosome partition protein MukB (1485 aa).

34-41 contributes to the ATP binding site; that stretch reads GGNGAGKS. Coiled-coil stretches lie at residues 337–480 and 509–605; these read LNLV…QAYQ and QHLA…PVWL. The interval 666–783 is flexible hinge; it reads PSGAEDARLI…EVPLFGRAAR (118 aa). Coiled-coil stretches lie at residues 835-915 and 977-1116; these read EAEI…IQQH and GMLT…AKAG.

The protein belongs to the SMC family. MukB subfamily. Homodimerization via its hinge domain. Binds to DNA via its C-terminal region. Interacts, and probably forms a ternary complex, with MukE and MukF via its C-terminal region. The complex formation is stimulated by calcium or magnesium. Interacts with tubulin-related protein FtsZ.

It is found in the cytoplasm. The protein localises to the nucleoid. Functionally, plays a central role in chromosome condensation, segregation and cell cycle progression. Functions as a homodimer, which is essential for chromosome partition. Involved in negative DNA supercoiling in vivo, and by this means organize and compact chromosomes. May achieve or facilitate chromosome segregation by condensation DNA from both sides of a centrally located replisome during cell division. The chain is Chromosome partition protein MukB from Yersinia pseudotuberculosis serotype IB (strain PB1/+).